A 229-amino-acid chain; its full sequence is 2,3-bisphosphoglycerate-dependent phosphoglycerate mutase (229 aa).

Substrate contacts are provided by residues 7–14, 20–21, Arg-59, 86–89, Lys-97, 113–114, and 182–183; these read RHGQSEWN, TG, ERHY, RR, and GN. Catalysis depends on His-8, which acts as the Tele-phosphohistidine intermediate. Catalysis depends on Glu-86, which acts as the Proton donor/acceptor.

It belongs to the phosphoglycerate mutase family. BPG-dependent PGAM subfamily.

The catalysed reaction is (2R)-2-phosphoglycerate = (2R)-3-phosphoglycerate. It functions in the pathway carbohydrate degradation; glycolysis; pyruvate from D-glyceraldehyde 3-phosphate: step 3/5. In terms of biological role, catalyzes the interconversion of 2-phosphoglycerate and 3-phosphoglycerate. This Listeria monocytogenes serotype 4b (strain F2365) protein is 2,3-bisphosphoglycerate-dependent phosphoglycerate mutase.